Reading from the N-terminus, the 55-residue chain is Large ribosomal subunit protein bL33 (55 aa).

This sequence belongs to the bacterial ribosomal protein bL33 family.

The sequence is that of Large ribosomal subunit protein bL33 from Methylobacterium sp. (strain 4-46).